The primary structure comprises 37 residues: Large ribosomal subunit protein bL36 (37 aa).

It belongs to the bacterial ribosomal protein bL36 family.

This Staphylococcus carnosus (strain TM300) protein is Large ribosomal subunit protein bL36.